We begin with the raw amino-acid sequence, 704 residues long: Acetyl-coenzyme A synthetase 1 (704 aa).

Residues 239-242 and Thr-358 each bind CoA; that span reads RGGK. ATP is bound by residues 434-436, 458-463, Asp-550, and Arg-565; these read GEP and DTYWQT. Position 573 (Ser-573) interacts with CoA. Arg-576 is an ATP binding site. Residue Arg-641 coordinates CoA. Residues 702-704 carry the Microbody targeting signal motif; it reads VKL.

This sequence belongs to the ATP-dependent AMP-binding enzyme family.

The protein localises to the microsome. It is found in the endoplasmic reticulum. It carries out the reaction acetate + ATP + CoA = acetyl-CoA + AMP + diphosphate. This is Acetyl-coenzyme A synthetase 1 (ACS1) from Candida glabrata (strain ATCC 2001 / BCRC 20586 / JCM 3761 / NBRC 0622 / NRRL Y-65 / CBS 138) (Yeast).